Consider the following 453-residue polypeptide: MAQDIFMDPWQSATSFAMEDEDMGMPSGKYARMEDEMGENKERFARENHSEIERRRRNKMTHYINELAEMVPQCASLGRKPDKLTILRMAVSHMKGIRGHTAQDETSYKPSFLTDQELKHLILEAANGFLFVVCCQTGKVLYVADSITPVLNLKQEDWLQRNLNELIHPDDQDKIRDQLCGSEVSVNKVLDLKSGSVKREGASTRVHMSCRRGFICRMRVGALEPLHRLRNRRPLFQHAGQNYVVMHCTGYIKNAPPQGINAPASSCLVAIARLQVASMPVCADPTSTNQFSVRVSEDGKMTFIDARVSDLIGLSSDQLIGRYWWNLAHPADEKTLQDSFVALLSDQPMRINIRVRTSTDYIPCTVSAYKFMNPYSEQFEYVVATHQIAPQEDINNWVTAPTVPQPQASEFGELGGAPSAVDYGQSSSGGWRPEAQGAPQAQWQWDPMNGYNQ.

In terms of domain architecture, bHLH spans 44 to 97 (FARENHSEIERRRRNKMTHYINELAEMVPQCASLGRKPDKLTILRMAVSHMKGI). PAS domains are found at residues 115-193 (DQEL…LDLK) and 277-347 (ASMP…LSDQ). The 45-residue stretch at 348-392 (PMRINIRVRTSTDYIPCTVSAYKFMNPYSEQFEYVVATHQIAPQE) folds into the PAC domain. The interval 410-453 (EFGELGGAPSAVDYGQSSSGGWRPEAQGAPQAQWQWDPMNGYNQ) is disordered.

Interacts with hif-1. Heterodimer; efficient DNA binding requires dimerization with another bHLH protein. Forms a heterodimer with ahr-1; binds DNA as heterodimer. Forms a heterodimer with PAS domain-containing protein cky-1; binds DNA as heterodimer. As to expression, expressed in many cell types throughout development, including hypodermal cells, intestinal cells, pharyngeal cells, and neurons. Expressed in every cell during embryo.

It localises to the nucleus. In terms of biological role, transcription factor. Efficient DNA binding requires dimerization with another bHLH protein, such as cky-1 or ahr-1. Regulates transcription of target genes, probably acting in complex with cky-1. Has a role in cellular differentiation. Required for pharyngeal development. In collaboration with ahr-1 it is involved in RMEL/R and SDQR neuron cell migration. Acts in the cellular response to hypoxia. Involved in aggregation behavior by regulating soluble guanylate cyclase gene expression in the URX neurons. The sequence is that of Aryl hydrocarbon receptor nuclear translocator homolog from Caenorhabditis elegans.